Here is a 325-residue protein sequence, read N- to C-terminus: Delta(1)-pyrroline-2-carboxylate reductase (325 aa).

Belongs to the ornithine cyclodeaminase/mu-crystallin family.

The enzyme catalyses L-proline + NAD(+) = 1-pyrroline-2-carboxylate + NADH + H(+). It carries out the reaction L-proline + NADP(+) = 1-pyrroline-2-carboxylate + NADPH + H(+). Its function is as follows. Catalyzes the reduction of Delta(1)-pyrroline-2-carboxylate (Pyr2C) to L-proline, using preferentially NADPH over NADH as the electron donor. May be involved in a degradation pathway that converts trans-3-hydroxy-L-proline (t3LHyp) to L-proline. This chain is Delta(1)-pyrroline-2-carboxylate reductase, found in Bacillus cereus (strain ZK / E33L).